Consider the following 305-residue polypeptide: Probable GTP 3',8-cyclase (305 aa).

Residues 6-233 (RHGRPVMSLR…MQDRKKYYID (228 aa)) form the Radical SAM core domain. Arg-15 contacts GTP. [4Fe-4S] cluster is bound by residues Cys-22 and Cys-26. Tyr-28 serves as a coordination point for S-adenosyl-L-methionine. Cys-29 contacts [4Fe-4S] cluster. Arg-62 contacts GTP. Gly-66 contacts S-adenosyl-L-methionine. GTP is bound at residue Thr-92. Ser-116 serves as a coordination point for S-adenosyl-L-methionine. A GTP-binding site is contributed by Lys-153. [4Fe-4S] cluster contacts are provided by Cys-249 and Cys-252. 254 to 256 (RLR) is a binding site for GTP. Cys-266 contributes to the [4Fe-4S] cluster binding site.

This sequence belongs to the radical SAM superfamily. MoaA family. [4Fe-4S] cluster is required as a cofactor.

The enzyme catalyses GTP + AH2 + S-adenosyl-L-methionine = (8S)-3',8-cyclo-7,8-dihydroguanosine 5'-triphosphate + 5'-deoxyadenosine + L-methionine + A + H(+). The protein operates within cofactor biosynthesis; molybdopterin biosynthesis. In terms of biological role, catalyzes the cyclization of GTP to (8S)-3',8-cyclo-7,8-dihydroguanosine 5'-triphosphate. The sequence is that of Probable GTP 3',8-cyclase from Methanothermobacter thermautotrophicus (strain ATCC 29096 / DSM 1053 / JCM 10044 / NBRC 100330 / Delta H) (Methanobacterium thermoautotrophicum).